We begin with the raw amino-acid sequence, 175 residues long: Arginine repressor (175 aa).

Residues 1 to 23 (MSVSTPERGGAEQGKGPAIARTR) form a disordered region.

It belongs to the ArgR family.

Its subcellular location is the cytoplasm. It participates in amino-acid biosynthesis; L-arginine biosynthesis [regulation]. Regulates arginine biosynthesis genes. The chain is Arginine repressor from Nocardia farcinica (strain IFM 10152).